The primary structure comprises 398 residues: MQRVRVSSQRAVVHKLGDSQMTLSPKFRVAASIQSTLFDRSSELELSLRGEPLIPGLPDDVALNCLLRVPVQSHVSSKSVCKRWHLLFGTKETFFAKRKEFGFKDPWLFVVGFSRCTGKIQWKVLDLRNLTWHEIPAMPCRDKVCPHGFRSVSMPREGTMFVCGGMVSDSDCPLDLVLKYDMVKNHWTVTNKMITARSFFASGVIDGMIYAAGGNAADLYELDCAEVLNPLDGNWRPVSNMVAHMASYDTAVLNGKLLVTEGWLWPFFVSPRGQVYDPRTDQWETMSMGLREGWTGTSVVIYDRLFIVSELERMKMKVYDPVTDSWETINGPELPEQICRPFAVNCYGNRVYVVGRNLHLAVGNIWQSENKFAVRWEVVESPERYADITPSNSQILFA.

An F-box domain is found at 51–98 (EPLIPGLPDDVALNCLLRVPVQSHVSSKSVCKRWHLLFGTKETFFAKR). 5 Kelch repeats span residues 106–152 (PWLF…FRSV), 159–207 (TMFV…VIDG), 209–255 (IYAA…VLNG), 257–304 (LLVT…IYDR), and 305–346 (LFIV…AVNC).

The protein is F-box/kelch-repeat protein At1g30090 of Arabidopsis thaliana (Mouse-ear cress).